The following is a 375-amino-acid chain: MVDNSEIRVVVGMSGGVDSSVSALLLKQQGFDVVGVFMKNWDDTDDSGVCTATEDYEDVKKVADEIGIPYYSINFEKDYWERVFEYFLNEYKKGRTPNPDVMCNKEIKFKSFLDFAMDLDADYIAMGHYAATKVDENGIVHMMRPKDGNKDQTYFLSQLSQDQLKKVIFPLANLTKPQVREIAIDAGLATAKKKDSTGICFIGERNFKKFLSEFLPAQSGKMVTPDGKVVGEHAGLMYYTIGQRSGLGLGSTKESTDPWFVVGKDLKKNELIVEQGYDSKLLYATSLDASGVSFFTGQPEHDIDLKCTAKFRYRQPDVGVTMHYHAKDNTVHVEFDEPARAVTPGQAIVFYNGEECLGGATIDRAYQNEKQLQLV.

ATP contacts are provided by residues 12–19 (GMSGGVDS) and Met-38. Residues 98–100 (NPD) form an interaction with target base in tRNA region. Cys-103 acts as the Nucleophile in catalysis. A disulfide bridge connects residues Cys-103 and Cys-200. Gly-127 is a binding site for ATP. Residues 150–152 (KDQ) form an interaction with tRNA region. Cys-200 functions as the Cysteine persulfide intermediate in the catalytic mechanism. Positions 312 to 313 (RY) are interaction with tRNA.

The protein belongs to the MnmA/TRMU family.

The protein resides in the cytoplasm. The catalysed reaction is S-sulfanyl-L-cysteinyl-[protein] + uridine(34) in tRNA + AH2 + ATP = 2-thiouridine(34) in tRNA + L-cysteinyl-[protein] + A + AMP + diphosphate + H(+). In terms of biological role, catalyzes the 2-thiolation of uridine at the wobble position (U34) of tRNA, leading to the formation of s(2)U34. The protein is tRNA-specific 2-thiouridylase MnmA of Lactobacillus gasseri (strain ATCC 33323 / DSM 20243 / BCRC 14619 / CIP 102991 / JCM 1131 / KCTC 3163 / NCIMB 11718 / NCTC 13722 / AM63).